The chain runs to 185 residues: Ribosome-recycling factor (185 aa).

The protein belongs to the RRF family.

The protein localises to the cytoplasm. Functionally, responsible for the release of ribosomes from messenger RNA at the termination of protein biosynthesis. May increase the efficiency of translation by recycling ribosomes from one round of translation to another. The chain is Ribosome-recycling factor from Exiguobacterium sibiricum (strain DSM 17290 / CCUG 55495 / CIP 109462 / JCM 13490 / 255-15).